The primary structure comprises 388 residues: Angiopoietin-related protein 5 (388 aa).

Residues 1 to 25 (MMSPSQASLLFLNVCIFICGEAVQG) form the signal peptide. A glycan (N-linked (GlcNAc...) asparagine) is linked at N53. Residues 98–123 (LRNMMDEQQASLDYLSNQVNELMNRV) adopt a coiled-coil conformation. The region spanning 141–383 (RPVQSHGLDC…SVSMKIRRMY (243 aa)) is the Fibrinogen C-terminal domain. N238 carries an N-linked (GlcNAc...) asparagine glycan. 2 cysteine pairs are disulfide-bonded: C310–C314 and C324–C338. N-linked (GlcNAc...) asparagine glycosylation occurs at N329.

Mainly expressed in adult heart.

It localises to the secreted. This Homo sapiens (Human) protein is Angiopoietin-related protein 5 (ANGPTL5).